The following is a 311-amino-acid chain: Metal-staphylopine import system permease protein CntB (311 aa).

The next 6 membrane-spanning stretches (helical) occupy residues 9–29 (IALM…LTYI), 105–125 (LTII…VVSA), 139–159 (VAFF…IIYV), 173–193 (GPES…GIYF), 237–257 (IFCM…YIFA), and 274–294 (FPVI…FNTL). One can recognise an ABC transmembrane type-1 domain in the interval 99–295 (FMNTLKLTII…VLFIVFNTLA (197 aa)).

It belongs to the binding-protein-dependent transport system permease family. The complex is composed of two ATP-binding proteins (CntD and CntF), two transmembrane proteins (CntB and CntC) and a solute-binding protein (CntA).

The protein localises to the cell membrane. In terms of biological role, part of the ABC transporter complex CntABCDF (Opp1) involved in the uptake of metal in complex with the metallophore staphylopine (StP). May be involved in the import of a large array of divalent metals ions such as nickel, cobalt, zinc, copper and iron. Probably responsible for the translocation of the substrate across the membrane. This Staphylococcus aureus (strain Mu50 / ATCC 700699) protein is Metal-staphylopine import system permease protein CntB.